The primary structure comprises 1084 residues: AP-3 complex subunit beta-1 (1084 aa).

A compositionally biased stretch (polar residues) spans 1–11; sequence MSSNSFAYNEQ. A disordered region spans residues 1–26; it reads MSSNSFAYNEQSGGGEATELGQEATS. Phosphoserine occurs at positions 276 and 609. The disordered stretch occupies residues 663–800; that stretch reads AGKAKKENPD…KEKKTKQERN (138 aa). A compositionally biased stretch (basic and acidic residues) spans 666–677; sequence AKKENPDKKFYS. Residues 678-717 are compositionally biased toward acidic residues; the sequence is ESEEEEDSSESSSDSESESGSESGEDEEDDRSGDSAEDSG. The span at 718–729 shows a compositional bias: low complexity; that stretch reads ESGSEPEAGKGR. Positions 738–753 are enriched in basic and acidic residues; it reads GRGDSKDVDKEKENSK. At Ser742 the chain carries Phosphoserine. The segment covering 754–767 has biased composition (low complexity); sequence TSESSSGESSSIEE. The segment covering 768 to 781 has biased composition (acidic residues); the sequence is SSSDSESESESESE. Residues 782 to 800 show a composition bias toward basic and acidic residues; that stretch reads SESRKVTKEKEKKTKQERN.

This sequence belongs to the adaptor complexes large subunit family. As to quaternary structure, adaptor protein complex 3 (AP-3) is a heterotetramer composed of two large adaptins (delta-type subunit AP3D1 and beta-type subunit AP3B1 or AP3B2), a medium adaptin (mu-type subunit AP3M1 or AP3M2) and a small adaptin (sigma-type subunit APS1 or AP3S2). AP-3 associates with the BLOC-1 complex. Interacts with KIF3A; interaction is direct; interaction is impaired by pyrophosphorylation of AP3B1. In terms of processing, phosphorylated on serine residues. Pyrophosphorylation by 5-diphosphoinositol pentakisphosphate (5-IP7) impairs interaction with KIF3A. Serine pyrophosphorylation is achieved by Mg(2+)-dependent, but enzyme independent transfer of a beta-phosphate from a inositol pyrophosphate to a pre-phosphorylated serine residue.

The protein resides in the cytoplasmic vesicle. It is found in the clathrin-coated vesicle membrane. Its subcellular location is the golgi apparatus. Functionally, subunit of non-clathrin- and clathrin-associated adaptor protein complex 3 (AP-3) that plays a role in protein sorting in the late-Golgi/trans-Golgi network (TGN) and/or endosomes. The AP complexes mediate both the recruitment of clathrin to membranes and the recognition of sorting signals within the cytosolic tails of transmembrane cargo molecules. AP-3 appears to be involved in the sorting of a subset of transmembrane proteins targeted to lysosomes and lysosome-related organelles. In concert with the BLOC-1 complex, AP-3 is required to target cargos into vesicles assembled at cell bodies for delivery into neurites and nerve terminals. This Bos taurus (Bovine) protein is AP-3 complex subunit beta-1 (AP3B1).